A 569-amino-acid chain; its full sequence is Oxygen-dependent choline dehydrogenase (569 aa).

D9–E38 lines the FAD pocket. H475 acts as the Proton acceptor in catalysis.

Belongs to the GMC oxidoreductase family. It depends on FAD as a cofactor.

The catalysed reaction is choline + A = betaine aldehyde + AH2. The enzyme catalyses betaine aldehyde + NAD(+) + H2O = glycine betaine + NADH + 2 H(+). It functions in the pathway amine and polyamine biosynthesis; betaine biosynthesis via choline pathway; betaine aldehyde from choline (cytochrome c reductase route): step 1/1. Its function is as follows. Involved in the biosynthesis of the osmoprotectant glycine betaine. Catalyzes the oxidation of choline to betaine aldehyde and betaine aldehyde to glycine betaine at the same rate. This is Oxygen-dependent choline dehydrogenase from Staphylococcus aureus (strain MSSA476).